Here is a 760-residue protein sequence, read N- to C-terminus: Cellulose synthase-like protein G1 (760 aa).

A run of 2 helical transmembrane segments spans residues 28-48 (IYAI…VHSL) and 54-74 (TLIT…WATT). Residues D142 and D447 contribute to the active site. The next 5 membrane-spanning stretches (helical) occupy residues 530–550 (IPLT…VSVF), 558–578 (FWLY…DFLL), 593–613 (LMIK…LKTL), 656–676 (VAIV…FCGG), and 680–700 (LELM…GAMV).

The protein belongs to the glycosyltransferase 2 family. Plant cellulose synthase-like G subfamily. In terms of tissue distribution, expressed in young seedlings, primarily in the vascular tissue.

It localises to the golgi apparatus membrane. In terms of biological role, thought to be a Golgi-localized beta-glycan synthase that polymerize the backbones of noncellulosic polysaccharides (hemicelluloses) of plant cell wall. The protein is Cellulose synthase-like protein G1 (CSLG1) of Arabidopsis thaliana (Mouse-ear cress).